The chain runs to 148 residues: uncharacterized protein (148 aa).

Residues 3 to 64 form the HTH asnC-type domain; it reads LDALDRKILE…KLNYESIGYD (62 aa). The H-T-H motif DNA-binding region spans 22-41; sequence YREIAKDLNVAVGTIYNRIK.

This is an uncharacterized protein from Pyrococcus horikoshii (strain ATCC 700860 / DSM 12428 / JCM 9974 / NBRC 100139 / OT-3).